Here is a 160-residue protein sequence, read N- to C-terminus: Cytochrome b6-f complex subunit 4 (160 aa).

3 consecutive transmembrane segments (helical) span residues 36 to 56 (LLYI…GLAV), 95 to 115 (LLGV…PFLE), and 131 to 151 (TVFL…TLPI).

Belongs to the cytochrome b family. PetD subfamily. In terms of assembly, the 4 large subunits of the cytochrome b6-f complex are cytochrome b6, subunit IV (17 kDa polypeptide, petD), cytochrome f and the Rieske protein, while the 4 small subunits are petG, petL, petM and petN. The complex functions as a dimer.

It is found in the plastid. It localises to the chloroplast thylakoid membrane. Functionally, component of the cytochrome b6-f complex, which mediates electron transfer between photosystem II (PSII) and photosystem I (PSI), cyclic electron flow around PSI, and state transitions. This is Cytochrome b6-f complex subunit 4 from Lotus japonicus (Lotus corniculatus var. japonicus).